The chain runs to 324 residues: Lignin-forming anionic peroxidase (324 aa).

A signal peptide spans Met1–Ala22. Pyrrolidone carboxylic acid is present on Gln23. Cystine bridges form between Cys33-Cys111, Cys66-Cys71, Cys117-Cys320, and Cys196-Cys228. The N-linked (GlcNAc...) asparagine glycan is linked to Asn35. The Proton acceptor role is filled by His64. Positions 65, 68, 70, 72, and 74 each coordinate Ca(2+). Asn150 carries N-linked (GlcNAc...) asparagine glycosylation. Pro159 lines the substrate pocket. His189 lines the heme b pocket. Thr190 is a binding site for Ca(2+). Residue Asn207 is glycosylated (N-linked (GlcNAc...) asparagine). Residues Asp242, Thr245, and Asp250 each contribute to the Ca(2+) site.

The protein belongs to the peroxidase family. Classical plant (class III) peroxidase subfamily. Requires Ca(2+) as cofactor. The cofactor is heme b.

It localises to the secreted. The enzyme catalyses 2 a phenolic donor + H2O2 = 2 a phenolic radical donor + 2 H2O. In terms of biological role, removal of H(2)O(2), oxidation of toxic reductants, biosynthesis and degradation of lignin, suberization, auxin catabolism, response to environmental stresses such as wounding, pathogen attack and oxidative stress. These functions might be dependent on each isozyme/isoform in each plant tissue. Its function is as follows. Plays an integral role in secondary cell wall biosynthesis by the polymerization of cinnamyl alcohols into lignin and by forming rigid cross-links between cellulose, pectin, hydroxy-proline-rich glycoproteins, and lignin. This Nicotiana tabacum (Common tobacco) protein is Lignin-forming anionic peroxidase.